The chain runs to 351 residues: Rhodopsin (351 aa).

Topologically, residues 1 to 36 (MNGTEGPFFYIPMVNTTGIVRSPYEYPQYYLVNPAA) are extracellular. Residues N2 and N15 are each glycosylated (N-linked (GlcNAc...) asparagine). Residues 37 to 61 (YAILGAYMFFLIIVGFPVNFMTLYV) form a helical membrane-spanning segment. Topologically, residues 62 to 73 (TLEHKKLRTPLN) are cytoplasmic. A helical transmembrane segment spans residues 74 to 96 (YILLNLAVADLFMVIGGFTTTMY). The Extracellular portion of the chain corresponds to 97-110 (TSMHGYFVLGRLGC). C110 and C187 are oxidised to a cystine. A helical transmembrane segment spans residues 111–133 (NLEGFFATLGGMISLWSLAVLAI). Positions 134-136 (ERW) match the 'Ionic lock' involved in activated form stabilization motif. Topologically, residues 134-152 (ERWVVVCKPISNFRFGENH) are cytoplasmic. Residues 153-173 (AIMGVSLTWGMALACTVPPLV) form a helical membrane-spanning segment. Over 174–202 (GWSRYIPEGMQCSCGIDYYTRAEGFNNES) the chain is Extracellular. N-linked (GlcNAc...) asparagine glycosylation occurs at N200. The helical transmembrane segment at 203–224 (FVLYMFFCHFTIPLTIIFFCYG) threads the bilayer. Over 225–252 (RLLCAVKEAAAAQQESETTQRAEREVTR) the chain is Cytoplasmic. Residues 253–274 (MVIIMVIGFLVCWLPYASVAWF) traverse the membrane as a helical segment. Topologically, residues 275–286 (IFTHQGSEFGPL) are extracellular. The chain crosses the membrane as a helical span at residues 287 to 308 (FMTIPAFFAKSSSIYNPMIYIC). The residue at position 296 (K296) is an N6-(retinylidene)lysine. Residues 309-351 (MNKQFRHCMITTLFCGKNPFEGEEEGASSTKTEASSASSVSPA) lie on the Cytoplasmic side of the membrane. C323 carries the S-palmitoyl cysteine lipid modification. A disordered region spans residues 330–351 (GEEEGASSTKTEASSASSVSPA). The span at 335-351 (ASSTKTEASSASSVSPA) shows a compositional bias: low complexity.

It belongs to the G-protein coupled receptor 1 family. Opsin subfamily. Post-translationally, phosphorylated on some or all of the serine and threonine residues present in the C-terminal region. In terms of processing, contains one covalently linked retinal chromophore.

The protein localises to the membrane. It is found in the cell projection. It localises to the cilium. Its subcellular location is the photoreceptor outer segment. In terms of biological role, photoreceptor required for image-forming vision at low light intensity. While most salt water fish species use retinal as chromophore, most freshwater fish use 3-dehydroretinal, or a mixture of retinal and 3-dehydroretinal. Light-induced isomerization of 11-cis to all-trans retinal triggers a conformational change that activates signaling via G-proteins. Subsequent receptor phosphorylation mediates displacement of the bound G-protein alpha subunit by arrestin and terminates signaling. This Sargocentron diadema (Crown squirrelfish) protein is Rhodopsin (rho).